The chain runs to 244 residues: MAKKGPKRHLKRLAAPVRWELPRKIHKFTVRPLPGAHPMSESLPLLLIVRDILKYADNAREAKKIIKMGKVLVDGRVRKEEKLPVGLMDVVSLPDANENYRVLFDRKGRIKLKPTENPDVKLCKIKNKTVIKGGHIQLNLHDGRNIVIKVSDPTKAEEDVYKTGDTLLISIPEQEIKAHIPFEVGKLAYITGGKHVGDFAKIVEIERRGIYPDIVTLENMDGEKFKTVKDYVFVVGDEEPIIKL.

The S4 RNA-binding domain occupies 43-108 (LPLLLIVRDI…NYRVLFDRKG (66 aa)).

It belongs to the eukaryotic ribosomal protein eS4 family.

The protein is Small ribosomal subunit protein eS4 (rps4e) of Methanocaldococcus jannaschii (strain ATCC 43067 / DSM 2661 / JAL-1 / JCM 10045 / NBRC 100440) (Methanococcus jannaschii).